The following is a 519-amino-acid chain: bZIP transcription factor 30 (519 aa).

Disordered stretches follow at residues 1–30 (MGGG…IPKH), 45–83 (FRHP…QPSS), 108–202 (TGAG…RKPE), 222–295 (VLNS…TGRH), and 315–339 (SSLK…NSSA). The span at 51 to 61 (GAPPPPIPPIS) shows a compositional bias: pro residues. Polar residues predominate over residues 149-173 (SDVTFGFSSMMSQNQKSPPLSSLER). Positions 187-202 (VKKEPREGFYKGRKPE) are enriched in basic and acidic residues. 2 stretches are compositionally biased toward low complexity: residues 244 to 268 (SRGS…SASG) and 317 to 329 (LKLP…KVSP). Over residues 330-339 (TNSGEGNSSA) the composition is skewed to polar residues. The tract at residues 372-393 (KRVKRILANRVSAARSKERKTR) is basic motif. The stretch at 386-460 (RSKERKTRYM…SEKLNEEVQR (75 aa)) forms a coiled coil. The interval 398 to 433 (LEHKVQTLQTEATTLSAQLTHLQRDSMGLTNQNSEL) is leucine-zipper. A disordered region spans residues 465–519 (IGEPNRRQSGSSSSESKMSLNPEMFQQLSISQLQHQQMQHSNQCSTMKAKHTSND). 2 stretches are compositionally biased toward low complexity: residues 473 to 483 (SGSSSSESKMS) and 490 to 509 (QQLS…NQCS).

Interacts with WUS, HEC1, KNAT1, KNAT2, HAT1, BEL1, and NGA1. As to expression, expressed in inflorescence meristem, floral organ primordia, gynoecia, ovules and carpel margin meristem.

It is found in the nucleus. Functionally, transcription factor that acts as a repressor of reproductive development, meristem size and plant growth. Acts as a transcriptional repressor in inflorescence tissues. Interacts with well known regulators of meristem and gynoecium development such as WUS, HEC1, KNAT1, KNAT2, HAT1, BEL1 and NGA1. Acts as a positive regulator of JAG and OFP1 expression in developing gynoecia. The protein is bZIP transcription factor 30 of Arabidopsis thaliana (Mouse-ear cress).